The sequence spans 86 residues: Putative regulatory protein Dvul_2085 (86 aa).

It belongs to the RemA family.

This Nitratidesulfovibrio vulgaris (strain DP4) (Desulfovibrio vulgaris) protein is Putative regulatory protein Dvul_2085.